We begin with the raw amino-acid sequence, 131 residues long: Acidic leucine-rich nuclear phosphoprotein 32 family member D (131 aa).

5 LRR repeats span residues 18–38, 43–64, 65–87, 89–110, and 114–131; these read DVKELFLDNSQSNEGKLEGLT, ELELLNTINIGLTSIANLPKLN, KLKKLELSSNRASVGLEVLAEKC, NLIHLNLSGNKIKDLSTIEPLK, and NLESLDLFTCEVTNLNNY.

The protein belongs to the ANP32 family.

This Homo sapiens (Human) protein is Acidic leucine-rich nuclear phosphoprotein 32 family member D (ANP32D).